Consider the following 342-residue polypeptide: Holliday junction branch migration complex subunit RuvB (342 aa).

The tract at residues 1–21 is disordered; it reads MSVEHSPVDPSAEPPEKAEEA. Positions 1 to 184 are large ATPase domain (RuvB-L); it reads MSVEHSPVDP…FGFTAQLDYY (184 aa). ATP is bound by residues L23, R24, G65, K68, T69, T70, 131-133, R174, Y184, and R221; that span reads EDF. T69 lines the Mg(2+) pocket. Residues 185 to 255 form a small ATPAse domain (RuvB-S) region; sequence EVADLERIVT…GAETALDLYE (71 aa). The interval 258–342 is head domain (RuvB-H); the sequence is PLGLDRLDRA…PPDSSGEGLF (85 aa). DNA is bound by residues R313 and R318.

Belongs to the RuvB family. Homohexamer. Forms an RuvA(8)-RuvB(12)-Holliday junction (HJ) complex. HJ DNA is sandwiched between 2 RuvA tetramers; dsDNA enters through RuvA and exits via RuvB. An RuvB hexamer assembles on each DNA strand where it exits the tetramer. Each RuvB hexamer is contacted by two RuvA subunits (via domain III) on 2 adjacent RuvB subunits; this complex drives branch migration. In the full resolvosome a probable DNA-RuvA(4)-RuvB(12)-RuvC(2) complex forms which resolves the HJ.

The protein localises to the cytoplasm. It catalyses the reaction ATP + H2O = ADP + phosphate + H(+). The RuvA-RuvB-RuvC complex processes Holliday junction (HJ) DNA during genetic recombination and DNA repair, while the RuvA-RuvB complex plays an important role in the rescue of blocked DNA replication forks via replication fork reversal (RFR). RuvA specifically binds to HJ cruciform DNA, conferring on it an open structure. The RuvB hexamer acts as an ATP-dependent pump, pulling dsDNA into and through the RuvAB complex. RuvB forms 2 homohexamers on either side of HJ DNA bound by 1 or 2 RuvA tetramers; 4 subunits per hexamer contact DNA at a time. Coordinated motions by a converter formed by DNA-disengaged RuvB subunits stimulates ATP hydrolysis and nucleotide exchange. Immobilization of the converter enables RuvB to convert the ATP-contained energy into a lever motion, pulling 2 nucleotides of DNA out of the RuvA tetramer per ATP hydrolyzed, thus driving DNA branch migration. The RuvB motors rotate together with the DNA substrate, which together with the progressing nucleotide cycle form the mechanistic basis for DNA recombination by continuous HJ branch migration. Branch migration allows RuvC to scan DNA until it finds its consensus sequence, where it cleaves and resolves cruciform DNA. The polypeptide is Holliday junction branch migration complex subunit RuvB (Cutibacterium acnes (strain DSM 16379 / KPA171202) (Propionibacterium acnes)).